We begin with the raw amino-acid sequence, 520 residues long: Ribonuclease Y (520 aa).

A helical membrane pass occupies residues 3–23 (IELAIIFIVLAAGAGFLIGNL). In terms of domain architecture, KH spans 210 to 273 (TVSVVALPSD…EVAKIALEKL (64 aa)). The 94-residue stretch at 336–429 (VYQHSLEVAF…VQAADALSGA (94 aa)) folds into the HD domain.

Belongs to the RNase Y family.

It localises to the cell membrane. In terms of biological role, endoribonuclease that initiates mRNA decay. This Geobacter sulfurreducens (strain ATCC 51573 / DSM 12127 / PCA) protein is Ribonuclease Y.